A 331-amino-acid chain; its full sequence is Ribose operon repressor (331 aa).

The HTH lacI-type domain maps to 1 to 56 (MTTIRDVAKHAKVSVATVSRVLNKKGYVSKEAEEAVLQAIKELNYQPSSVARSLYH). A DNA-binding region (H-T-H motif) is located at residues 4–23 (IRDVAKHAKVSVATVSRVLN).

Transcriptional repressor for the ribose rbsDACBK operon. The sequence is that of Ribose operon repressor (rbsR) from Halalkalibacterium halodurans (strain ATCC BAA-125 / DSM 18197 / FERM 7344 / JCM 9153 / C-125) (Bacillus halodurans).